Consider the following 510-residue polypeptide: NAD(P)H-quinone oxidoreductase subunit 2 A, chloroplastic (510 aa).

Helical transmembrane passes span Leu-24–Leu-44, Ile-57–Phe-77, Ile-99–Ile-119, Met-124–Cys-144, Leu-149–Tyr-169, Tyr-183–Gly-203, Pro-227–Ala-247, Trp-295–Ile-315, Met-323–Asp-343, Tyr-354–Leu-374, Ala-395–Phe-415, Leu-418–Leu-438, and Met-484–Ile-504.

It belongs to the complex I subunit 2 family. NDH is composed of at least 16 different subunits, 5 of which are encoded in the nucleus.

It localises to the plastid. Its subcellular location is the chloroplast thylakoid membrane. The enzyme catalyses a plastoquinone + NADH + (n+1) H(+)(in) = a plastoquinol + NAD(+) + n H(+)(out). The catalysed reaction is a plastoquinone + NADPH + (n+1) H(+)(in) = a plastoquinol + NADP(+) + n H(+)(out). In terms of biological role, NDH shuttles electrons from NAD(P)H:plastoquinone, via FMN and iron-sulfur (Fe-S) centers, to quinones in the photosynthetic chain and possibly in a chloroplast respiratory chain. The immediate electron acceptor for the enzyme in this species is believed to be plastoquinone. Couples the redox reaction to proton translocation, and thus conserves the redox energy in a proton gradient. The chain is NAD(P)H-quinone oxidoreductase subunit 2 A, chloroplastic from Ranunculus macranthus (Large buttercup).